The primary structure comprises 752 residues: Probable beta-glucosidase D (752 aa).

Residues 1–18 (MRFVSLAVGAALLGAAGA) form the signal peptide. N-linked (GlcNAc...) asparagine glycans are attached at residues N187 and N237. The active site involves D265. N299, N343, N441, N510, N532, N571, N586, N638, N661, and N743 each carry an N-linked (GlcNAc...) asparagine glycan.

It belongs to the glycosyl hydrolase 3 family.

It is found in the secreted. It catalyses the reaction Hydrolysis of terminal, non-reducing beta-D-glucosyl residues with release of beta-D-glucose.. Its pathway is glycan metabolism; cellulose degradation. Functionally, beta-glucosidases are one of a number of cellulolytic enzymes involved in the degradation of cellulosic biomass. Catalyzes the last step releasing glucose from the inhibitory cellobiose. This Aspergillus oryzae (strain ATCC 42149 / RIB 40) (Yellow koji mold) protein is Probable beta-glucosidase D (bglD).